Reading from the N-terminus, the 276-residue chain is C-type lectin domain family 12 member B (276 aa).

The Cytoplasmic segment spans residues 1–43 (MSEEVTYATLTFQDSAGARNNRDGNNLRKRGHPAPSPIWRHAA). An ITIM motif motif is present at residues 5–10 (VTYATL). The residue at position 7 (Y7) is a Phosphotyrosine. The helical; Signal-anchor for type II membrane protein transmembrane segment at 44–64 (LGLVTLCLMLLIGLVTLGMMF) threads the bilayer. Over 65-276 (LQISNDINSD…AAPVKTEDLD (212 aa)) the chain is Extracellular. N91, N176, and N237 each carry an N-linked (GlcNAc...) asparagine glycan. One can recognise a C-type lectin domain in the interval 150 to 264 (YQNSCYYFTT…CSAEIFWICE (115 aa)). 2 disulfides stabilise this stretch: C172–C263 and C242–C255.

As to quaternary structure, homodimer. Interacts (via ITIM motif) with PTPN6. Interacts (via ITIM motif) with PTPN11; this interaction triggers dephosphorylation and activation of PTPN11. Post-translationally, N-glycosylated. As to expression, detected in colon, heart, kidney, liver, lung, mammary gland, ovary, spleen and testis. Expressed in melanocytes (at protein level).

The protein resides in the cell membrane. In terms of biological role, inhibitory receptor postulated to negatively regulate immune and non-immune functions. Upon phosphorylation, recruits SH2 domain-containing PTPN6 and PTPN11 phosphatases to its ITIM motif and antagonizes activation signals. Although it inhibits KLRK1/NKG2D-mediated signaling, it does not bind known ligands of KLRK1/NKG2D and therefore is not its inhibitory counterpart. May limit activation of myeloid cell subsets in response to infection or tissue inflammation. May protect target cells against natural killer cell-mediated lysis. May negatively regulate cell cycle and differentiation of melanocytes via inactivation of STAT3. In Homo sapiens (Human), this protein is C-type lectin domain family 12 member B.